A 1089-amino-acid polypeptide reads, in one-letter code: Platelet-derived growth factor receptor alpha (1089 aa).

The N-terminal stretch at 1-23 (MGTSHPAFLVLGCLLTGLSLILC) is a signal peptide. Ig-like C2-type domains lie at 24–113 (QLSL…NELE), 117–201 (IYIY…FQTI), 202–306 (PFNV…KKVT), 319–410 (PTFS…FELL), and 414–517 (PSSI…LKLV). At 24–528 (QLSLPSILPN…PTLRSELTVA (505 aa)) the chain is on the extracellular side. N-linked (GlcNAc...) asparagine glycosylation is found at Asn42, Asn76, Asn103, and Asn179. Cys49 and Cys100 are joined by a disulfide. 2 cysteine pairs are disulfide-bonded: Cys150/Cys189 and Cys235/Cys290. N-linked (GlcNAc...) asparagine glycosylation is found at Asn353, Asn359, Asn458, and Asn468. Cysteines 435 and 501 form a disulfide. The helical transmembrane segment at 529–549 (AAVLVLLVIVIISLIVLVVIW) threads the bilayer. Topologically, residues 550 to 1089 (KQKPRYEIRW…SSDLVEDSFL (540 aa)) are cytoplasmic. 2 positions are modified to phosphotyrosine; by autocatalysis: Tyr572 and Tyr574. Residues 593 to 954 (LVLGRVLGSG…HLSEIVENLL (362 aa)) enclose the Protein kinase domain. ATP is bound by residues 599–607 (LGSGAFGKV) and Lys627. Phosphotyrosine; by autocatalysis is present on residues Tyr720, Tyr731, Tyr742, Tyr754, Tyr762, and Tyr768. Residue Asp818 is the Proton acceptor of the active site. Tyr849, Tyr988, and Tyr1018 each carry phosphotyrosine; by autocatalysis. The segment at 1018–1089 (YIIPLPDIDP…SSDLVEDSFL (72 aa)) is disordered. Positions 1041–1059 (SSQTSEESAIETGSSSSTF) are enriched in polar residues. A compositionally biased stretch (acidic residues) spans 1065–1089 (ETIEDIDMMDDIGIDSSDLVEDSFL).

This sequence belongs to the protein kinase superfamily. Tyr protein kinase family. CSF-1/PDGF receptor subfamily. As to quaternary structure, interacts with homodimeric PDGFA, PDGFB and PDGFC, and with heterodimers formed by PDGFA and PDGFB. Monomer in the absence of bound ligand. Interaction with dimeric PDGFA, PDGFB and/or PDGFC leads to receptor dimerization, where both PDGFRA homodimers and heterodimers with PDGFRB are observed. Interacts (tyrosine phosphorylated) with SHB (via SH2 domain). Interacts (tyrosine phosphorylated) with SHF (via SH2 domain). Interacts (tyrosine phosphorylated) with SRC (via SH2 domain). Interacts (tyrosine phosphorylated) with PIK3R1. Interacts (tyrosine phosphorylated) with PLCG1 (via SH2 domain). Interacts (tyrosine phosphorylated) with CRK, GRB2 and GRB7. Interacts with CD248; this interaction promotes PDGF receptor signaling pathway. In terms of assembly, (Microbial infection) Interacts with human cytomegalovirus/HHV-5 envelope glycoprotein B/gB. Also interacts with the trimeric complex gH-gL-gO. Trimer-PDGFRA interaction has an inhibitory effect on PDGFRA signaling. Post-translationally, N-glycosylated. Ubiquitinated, leading to its internalization and degradation. In terms of processing, autophosphorylated on tyrosine residues upon ligand binding. Autophosphorylation occurs in trans, i.e. one subunit of the dimeric receptor phosphorylates tyrosine residues on the other subunit. Phosphorylation at Tyr-731 and Tyr-742 is important for interaction with PIK3R1. Phosphorylation at Tyr-720 and Tyr-754 is important for interaction with PTPN11. Phosphorylation at Tyr-762 is important for interaction with CRK. Phosphorylation at Tyr-572 and Tyr-574 is important for interaction with SRC and SRC family members. Phosphorylation at Tyr-988 and Tyr-1018 is important for interaction with PLCG1. In terms of tissue distribution, detected in platelets (at protein level). Widely expressed. Detected in brain, fibroblasts, smooth muscle, heart, and embryo. Expressed in primary and metastatic colon tumors and in normal colon tissue.

It is found in the cell membrane. It localises to the cell projection. The protein localises to the cilium. The protein resides in the golgi apparatus. It carries out the reaction L-tyrosyl-[protein] + ATP = O-phospho-L-tyrosyl-[protein] + ADP + H(+). With respect to regulation, present in an inactive conformation in the absence of bound ligand. Binding of PDGFA and/or PDGFB leads to dimerization and activation by autophosphorylation on tyrosine residues. Inhibited by imatinib, nilotinib and sorafenib. Functionally, tyrosine-protein kinase that acts as a cell-surface receptor for PDGFA, PDGFB and PDGFC and plays an essential role in the regulation of embryonic development, cell proliferation, survival and chemotaxis. Depending on the context, promotes or inhibits cell proliferation and cell migration. Plays an important role in the differentiation of bone marrow-derived mesenchymal stem cells. Required for normal skeleton development and cephalic closure during embryonic development. Required for normal development of the mucosa lining the gastrointestinal tract, and for recruitment of mesenchymal cells and normal development of intestinal villi. Plays a role in cell migration and chemotaxis in wound healing. Plays a role in platelet activation, secretion of agonists from platelet granules, and in thrombin-induced platelet aggregation. Binding of its cognate ligands - homodimeric PDGFA, homodimeric PDGFB, heterodimers formed by PDGFA and PDGFB or homodimeric PDGFC -leads to the activation of several signaling cascades; the response depends on the nature of the bound ligand and is modulated by the formation of heterodimers between PDGFRA and PDGFRB. Phosphorylates PIK3R1, PLCG1, and PTPN11. Activation of PLCG1 leads to the production of the cellular signaling molecules diacylglycerol and inositol 1,4,5-trisphosphate, mobilization of cytosolic Ca(2+) and the activation of protein kinase C. Phosphorylates PIK3R1, the regulatory subunit of phosphatidylinositol 3-kinase, and thereby mediates activation of the AKT1 signaling pathway. Mediates activation of HRAS and of the MAP kinases MAPK1/ERK2 and/or MAPK3/ERK1. Promotes activation of STAT family members STAT1, STAT3 and STAT5A and/or STAT5B. Receptor signaling is down-regulated by protein phosphatases that dephosphorylate the receptor and its down-stream effectors, and by rapid internalization of the activated receptor. The protein is Platelet-derived growth factor receptor alpha (PDGFRA) of Homo sapiens (Human).